The primary structure comprises 537 residues: Chaperonin GroEL (537 aa).

Residues 29-32 (TLGP), 86-90 (DGTTT), glycine 413, 477-479 (NAA), and aspartate 493 contribute to the ATP site.

This sequence belongs to the chaperonin (HSP60) family. As to quaternary structure, forms a cylinder of 14 subunits composed of two heptameric rings stacked back-to-back. Interacts with the co-chaperonin GroES.

It is found in the cytoplasm. It catalyses the reaction ATP + H2O + a folded polypeptide = ADP + phosphate + an unfolded polypeptide.. Its function is as follows. Together with its co-chaperonin GroES, plays an essential role in assisting protein folding. The GroEL-GroES system forms a nano-cage that allows encapsulation of the non-native substrate proteins and provides a physical environment optimized to promote and accelerate protein folding. This Parascardovia denticolens (Bifidobacterium denticolens) protein is Chaperonin GroEL.